Reading from the N-terminus, the 314-residue chain is tRNA pseudouridine synthase B (314 aa).

Substrate is bound at residue His43. The Nucleophile role is filled by Asp48. 3 residues coordinate substrate: Tyr76, Tyr179, and Leu200.

This sequence belongs to the pseudouridine synthase TruB family. Type 1 subfamily.

The enzyme catalyses uridine(55) in tRNA = pseudouridine(55) in tRNA. Responsible for synthesis of pseudouridine from uracil-55 in the psi GC loop of transfer RNAs. The sequence is that of tRNA pseudouridine synthase B from Shigella boydii serotype 4 (strain Sb227).